The primary structure comprises 299 residues: NAD kinase (299 aa).

Aspartate 71 (proton acceptor) is an active-site residue. NAD(+)-binding positions include 71-72 (DG), 145-146 (ND), arginine 173, aspartate 175, 186-191 (TAYSLS), alanine 210, and glutamine 248.

The protein belongs to the NAD kinase family. A divalent metal cation serves as cofactor.

It is found in the cytoplasm. It catalyses the reaction NAD(+) + ATP = ADP + NADP(+) + H(+). Functionally, involved in the regulation of the intracellular balance of NAD and NADP, and is a key enzyme in the biosynthesis of NADP. Catalyzes specifically the phosphorylation on 2'-hydroxyl of the adenosine moiety of NAD to yield NADP. The protein is NAD kinase of Bordetella bronchiseptica (strain ATCC BAA-588 / NCTC 13252 / RB50) (Alcaligenes bronchisepticus).